Here is a 500-residue protein sequence, read N- to C-terminus: ATP synthase subunit alpha (500 aa).

169 to 176 (GDRQTGKT) contributes to the ATP binding site.

This sequence belongs to the ATPase alpha/beta chains family. In terms of assembly, F-type ATPases have 2 components, CF(1) - the catalytic core - and CF(0) - the membrane proton channel. CF(1) has five subunits: alpha(3), beta(3), gamma(1), delta(1), epsilon(1). CF(0) has three main subunits: a(1), b(2) and c(9-12). The alpha and beta chains form an alternating ring which encloses part of the gamma chain. CF(1) is attached to CF(0) by a central stalk formed by the gamma and epsilon chains, while a peripheral stalk is formed by the delta and b chains.

It is found in the cell membrane. The catalysed reaction is ATP + H2O + 4 H(+)(in) = ADP + phosphate + 5 H(+)(out). In terms of biological role, produces ATP from ADP in the presence of a proton gradient across the membrane. The alpha chain is a regulatory subunit. This is ATP synthase subunit alpha from Lactococcus lactis subsp. cremoris (strain SK11).